Here is a 332-residue protein sequence, read N- to C-terminus: Methionine synthase (332 aa).

Residues His211, Cys213, and Cys296 each contribute to the Zn(2+) site.

The protein belongs to the archaeal MetE family. The cofactor is Zn(2+).

Its pathway is amino-acid biosynthesis; L-methionine biosynthesis via de novo pathway. Its function is as follows. Catalyzes the transfer of a methyl group to L-homocysteine resulting in methionine formation. The physiological methyl donor is unknown. The polypeptide is Methionine synthase (Saccharolobus islandicus (strain Y.G.57.14 / Yellowstone #1) (Sulfolobus islandicus)).